We begin with the raw amino-acid sequence, 673 residues long: UvrABC system protein B (673 aa).

The 158-residue stretch at 26 to 183 folds into the Helicase ATP-binding domain; that stretch reads EGLEDGLAHQ…RRLAELQYTR (158 aa). Residue 39 to 46 participates in ATP binding; it reads GVTGSGKT. The Beta-hairpin motif lies at 92-115; the sequence is YYDYYQPEAYVPSSDTFIEKDASV. Positions 431–597 constitute a Helicase C-terminal domain; it reads QVDDLLSEIR…GLNKKVVDIL (167 aa). In terms of domain architecture, UVR spans 633-668; that stretch reads QQKIHELEGQMMQHAQNLEFEEAAEIRDQLHQLREL.

This sequence belongs to the UvrB family. Forms a heterotetramer with UvrA during the search for lesions. Interacts with UvrC in an incision complex.

The protein localises to the cytoplasm. Its function is as follows. The UvrABC repair system catalyzes the recognition and processing of DNA lesions. A damage recognition complex composed of 2 UvrA and 2 UvrB subunits scans DNA for abnormalities. Upon binding of the UvrA(2)B(2) complex to a putative damaged site, the DNA wraps around one UvrB monomer. DNA wrap is dependent on ATP binding by UvrB and probably causes local melting of the DNA helix, facilitating insertion of UvrB beta-hairpin between the DNA strands. Then UvrB probes one DNA strand for the presence of a lesion. If a lesion is found the UvrA subunits dissociate and the UvrB-DNA preincision complex is formed. This complex is subsequently bound by UvrC and the second UvrB is released. If no lesion is found, the DNA wraps around the other UvrB subunit that will check the other stand for damage. This chain is UvrABC system protein B, found in Citrobacter koseri (strain ATCC BAA-895 / CDC 4225-83 / SGSC4696).